Reading from the N-terminus, the 409-residue chain is Translation initiation factor 2 subunit gamma (409 aa).

A tr-type G domain is found at 7-203; sequence QPEVNIGLVG…AIEREIPTPE (197 aa). The segment at 16–23 is G1; that stretch reads GHVDHGKT. Positions 19, 23, 44, and 46 each coordinate Mg(2+). 19 to 24 lines the GTP pocket; sequence DHGKTT. A G2 region spans residues 44-48; the sequence is GISIR. Positions 90–93 are G3; the sequence is DAPG. GTP is bound by residues 146-149 and 181-183; these read NKID and SAQ. Residues 146–149 are G4; that stretch reads NKID. The G5 stretch occupies residues 181 to 183; it reads SAQ.

The protein belongs to the TRAFAC class translation factor GTPase superfamily. Classic translation factor GTPase family. EIF2G subfamily. As to quaternary structure, heterotrimer composed of an alpha, a beta and a gamma chain. The cofactor is Mg(2+).

The enzyme catalyses GTP + H2O = GDP + phosphate + H(+). EIF-2 functions in the early steps of protein synthesis by forming a ternary complex with GTP and initiator tRNA. This chain is Translation initiation factor 2 subunit gamma, found in Haloquadratum walsbyi (strain DSM 16790 / HBSQ001).